A 613-amino-acid polypeptide reads, in one-letter code: Dihydroxy-acid dehydratase (613 aa).

Residue D81 participates in Mg(2+) binding. Position 122 (C122) interacts with [2Fe-2S] cluster. Mg(2+) is bound by residues D123 and K124. The residue at position 124 (K124) is an N6-carboxylysine. C197 is a [2Fe-2S] cluster binding site. Residue E493 coordinates Mg(2+). S519 functions as the Proton acceptor in the catalytic mechanism.

The protein belongs to the IlvD/Edd family. As to quaternary structure, homodimer. It depends on [2Fe-2S] cluster as a cofactor. Mg(2+) is required as a cofactor.

The catalysed reaction is (2R)-2,3-dihydroxy-3-methylbutanoate = 3-methyl-2-oxobutanoate + H2O. The enzyme catalyses (2R,3R)-2,3-dihydroxy-3-methylpentanoate = (S)-3-methyl-2-oxopentanoate + H2O. It functions in the pathway amino-acid biosynthesis; L-isoleucine biosynthesis; L-isoleucine from 2-oxobutanoate: step 3/4. Its pathway is amino-acid biosynthesis; L-valine biosynthesis; L-valine from pyruvate: step 3/4. Its function is as follows. Functions in the biosynthesis of branched-chain amino acids. Catalyzes the dehydration of (2R,3R)-2,3-dihydroxy-3-methylpentanoate (2,3-dihydroxy-3-methylvalerate) into 2-oxo-3-methylpentanoate (2-oxo-3-methylvalerate) and of (2R)-2,3-dihydroxy-3-methylbutanoate (2,3-dihydroxyisovalerate) into 2-oxo-3-methylbutanoate (2-oxoisovalerate), the penultimate precursor to L-isoleucine and L-valine, respectively. The protein is Dihydroxy-acid dehydratase of Corynebacterium glutamicum (strain R).